The chain runs to 180 residues: Insulin-like growth factor 2 (180 aa).

A signal peptide spans 1–24 (MGIPMGKSMLVLLTFLAFASCCIA). The interval 25 to 52 (AYRPSETLCGGELVDTLQFVCGDRGFYF) is b. 3 disulfide bridges follow: Cys33/Cys71, Cys45/Cys84, and Cys70/Cys75. The interval 53-64 (SRPASRVSRRSR) is c. The segment at 65 to 85 (GIVEECCFRSCDLALLETYCA) is a. The tract at residues 86–91 (TPAKSE) is d. Positions 92 to 180 (RDVSTPPTVL…APPEMASNRK (89 aa)) are cleaved as a propeptide — e peptide. 3 O-linked (GalNAc...) threonine glycosylation sites follow: Thr96, Thr99, and Thr163. Positions 161–180 (LPTQDPAHGGAPPEMASNRK) are disordered.

Belongs to the insulin family. In terms of assembly, interacts with MYORG; this interaction is required for IGF2 secretion. Interacts with integrins ITGAV:ITGB3 and ITGA6:ITGB4; integrin-binding is required for IGF2 signaling. Interacts with IGFBP2. In terms of processing, O-glycosylated with core 1 or possibly core 8 glycans. Thr-96 is a minor glycosylation site compared to Thr-99. Proteolytically processed by PCSK4, proIGF2 is cleaved at Arg-128 and Arg-92 to generate big-IGF2 and mature IGF2. In terms of tissue distribution, expressed in heart, placenta, lung, liver, muscle, kidney, tongue, limb, eye and pancreas.

It localises to the secreted. In terms of biological role, the insulin-like growth factors possess growth-promoting activity. Major fetal growth hormone in mammals. Plays a key role in regulating fetoplacental development. IGF2 is influenced by placental lactogen. Also involved in tissue differentiation. In adults, involved in glucose metabolism in adipose tissue, skeletal muscle and liver. Acts as a ligand for integrin which is required for IGF2 signaling. Positively regulates myogenic transcription factor MYOD1 function by facilitating the recruitment of transcriptional coactivators, thereby controlling muscle terminal differentiation. Inhibits myoblast differentiation and modulates metabolism via increasing the mitochondrial respiration rate. Its function is as follows. Preptin undergoes glucose-mediated co-secretion with insulin, and acts as a physiological amplifier of glucose-mediated insulin secretion. Exhibits osteogenic properties by increasing osteoblast mitogenic activity through phosphoactivation of MAPK1 and MAPK3. The protein is Insulin-like growth factor 2 of Homo sapiens (Human).